The chain runs to 86 residues: Antimicrobial peptide 2 (86 aa).

The first 25 residues, 1–25 (MVNMKCVALIVIVMMAFMMVDPSMG), serve as a signal peptide directing secretion. Cystine bridges form between C29–C40, C34–C46, and C39–C53. One can recognise a Chitin-binding type-1 domain in the interval 29–53 (CVRGRCPSGMCCSQFGYCGKGPKYC). A propeptide spans 56–86 (ASTTVDHQADVAATKTAKNPTDAKLAGAGSP) (removed in mature form).

Homodimer.

Its function is as follows. Chitin-binding protein with a defensive function against numerous chitin containing fungal pathogens. It is also a potent inhibitor of Gram-positive bacteria. The sequence is that of Antimicrobial peptide 2 from Amaranthus caudatus (Love-lies-bleeding).